The primary structure comprises 372 residues: Chorismate synthase (372 aa).

Positions 48 and 54 each coordinate NADP(+). FMN contacts are provided by residues 125–127 (RSS), 238–239 (NA), Gly278, 293–297 (KPTSS), and Arg319.

It belongs to the chorismate synthase family. As to quaternary structure, homotetramer. FMNH2 serves as cofactor.

The catalysed reaction is 5-O-(1-carboxyvinyl)-3-phosphoshikimate = chorismate + phosphate. Its pathway is metabolic intermediate biosynthesis; chorismate biosynthesis; chorismate from D-erythrose 4-phosphate and phosphoenolpyruvate: step 7/7. Functionally, catalyzes the anti-1,4-elimination of the C-3 phosphate and the C-6 proR hydrogen from 5-enolpyruvylshikimate-3-phosphate (EPSP) to yield chorismate, which is the branch point compound that serves as the starting substrate for the three terminal pathways of aromatic amino acid biosynthesis. This reaction introduces a second double bond into the aromatic ring system. The sequence is that of Chorismate synthase from Xylella fastidiosa (strain M23).